A 201-amino-acid chain; its full sequence is Potassium-transporting ATPase KdpC subunit (201 aa).

The chain crosses the membrane as a helical span at residues Pro7 to Gly29.

The protein belongs to the KdpC family. As to quaternary structure, the system is composed of three essential subunits: KdpA, KdpB and KdpC.

Its subcellular location is the cell inner membrane. Its function is as follows. Part of the high-affinity ATP-driven potassium transport (or Kdp) system, which catalyzes the hydrolysis of ATP coupled with the electrogenic transport of potassium into the cytoplasm. This subunit acts as a catalytic chaperone that increases the ATP-binding affinity of the ATP-hydrolyzing subunit KdpB by the formation of a transient KdpB/KdpC/ATP ternary complex. This Methylobacterium radiotolerans (strain ATCC 27329 / DSM 1819 / JCM 2831 / NBRC 15690 / NCIMB 10815 / 0-1) protein is Potassium-transporting ATPase KdpC subunit.